The primary structure comprises 129 residues: UPF0146 protein VNG_2609C (129 aa).

Belongs to the UPF0146 family.

In Halobacterium salinarum (strain ATCC 700922 / JCM 11081 / NRC-1) (Halobacterium halobium), this protein is UPF0146 protein VNG_2609C.